We begin with the raw amino-acid sequence, 213 residues long: Calcium-dependent cell adhesion molecule 1 (213 aa).

4 repeat units span residues 1–48, 49–97, 98–146, and 147–194. Residues 1–194 form a 4 X approximate tandem repeats region; it reads MSVDANKVKF…IKKDETFPKN (194 aa).

This sequence belongs to the Dictyostelium CAD family. Post-translationally, the N-terminus is blocked.

The protein resides in the cell membrane. Functionally, mediates calcium-dependent cell-cell adhesion during the early stage of development. This chain is Calcium-dependent cell adhesion molecule 1 (cadA), found in Dictyostelium discoideum (Social amoeba).